The sequence spans 449 residues: Elongation factor 1-alpha 1 (449 aa).

One can recognise a tr-type G domain in the interval 5–230 (KVHMNLVVVG…DMLEPPVRPS (226 aa)). A G1 region spans residues 14-21 (GHVDAGKS). GTP is bound at residue 14 to 21 (GHVDAGKS). The interval 70–74 (GITID) is G2. Positions 91–94 (DAPG) are G3. GTP-binding positions include 91–95 (DAPGH) and 153–156 (NKMD). The tract at residues 153–156 (NKMD) is G4. Residues 194–196 (SGW) form a G5 region. A 5-glutamyl glycerylphosphorylethanolamine modification is found at E362.

Belongs to the TRAFAC class translation factor GTPase superfamily. Classic translation factor GTPase family. EF-Tu/EF-1A subfamily. In terms of processing, phosphatidylethanolamine (PE) is a direct precursor of the ethanolamine-phosphoglycerol (EPG) moiety.

Its subcellular location is the cytoplasm. Its function is as follows. This protein promotes the GTP-dependent binding of aminoacyl-tRNA to the A-site of ribosomes during protein biosynthesis. This chain is Elongation factor 1-alpha 1 (TEF1), found in Trypanosoma brucei brucei (strain 927/4 GUTat10.1).